The primary structure comprises 427 residues: Serine hydroxymethyltransferase (427 aa).

Residues Leu117 and 121–123 each bind (6S)-5,6,7,8-tetrahydrofolate; that span reads GHL. Lys226 carries the N6-(pyridoxal phosphate)lysine modification.

This sequence belongs to the SHMT family. Homodimer. It depends on pyridoxal 5'-phosphate as a cofactor.

Its subcellular location is the cytoplasm. It carries out the reaction (6R)-5,10-methylene-5,6,7,8-tetrahydrofolate + glycine + H2O = (6S)-5,6,7,8-tetrahydrofolate + L-serine. The enzyme catalyses L-threonine = acetaldehyde + glycine. The catalysed reaction is L-allo-threonine = acetaldehyde + glycine. It participates in one-carbon metabolism; tetrahydrofolate interconversion. The protein operates within amino-acid biosynthesis; glycine biosynthesis; glycine from L-serine: step 1/1. In terms of biological role, its primary function is to catalyze the reversible interconversion of serine and glycine with tetrahydrofolate (THF) serving as the one-carbon carrier. This reaction serves as the major source of one-carbon groups required for the biosynthesis of purines, thymidylate, methionine, and other important biomolecules. Also exhibits THF-independent aldolase activity toward beta-hydroxyamino acids, producing glycine and aldehydes, via a retro-aldol mechanism. Thus, is able to catalyze the cleavage of L-threonine, L-allo-threonine, L-threo-beta-phenylserine and L-erythro-beta-phenylserine. This second activity is likely to be physiological in H.thermophilus, which is an organism that lacks the ortholog gene for the 'real' threonine aldolase characterized in mesophilic bacteria (LtaE), yeast and plants. This Hydrogenobacter thermophilus (strain DSM 6534 / IAM 12695 / TK-6) protein is Serine hydroxymethyltransferase.